We begin with the raw amino-acid sequence, 633 residues long: MSHQSDLISEDILAYLGQHERKELLRFLTCGNVDDGKSTLIGRLLHDSKMIYEDHLEAITRDSKKVGTTGDDVDLALLVDGLQAEREQGITIDVAYRYFSTAKRKFIIADTPGHEQYTRNMATGASTCDLAIILIDARYGVQTQTRRHSFIASLLGIRHIVVAINKMDLKDFDQGVFEQIKADYLAFAEKIGLKTSSLHFVPMSALKGDNVVNKSERSPWYAGQSLMEILETVEIAADRNLDDMRFPVQYVNRPNLNFRGFAGTLASGVVRKGDEVVALPSGKGSKVKSIVTFEGELEQAGPGQAVTLTLEDEIDVSRGDMLVHADNRPLVTDGFDAMLVWMAEEPMLPGKKYDIKRATSYVPGSIPSIVHKVDVNTLERTPGSELKLNEIARVKVSLDAPIALDGYEQNRTTGAFIVIDRLTNGTVGAGMIVSAPPAAHGSSAHHGSNAHVTREERAGRFGQQPATVLFSGLSGAGKSTLAYAVERKLFDMGRAVYVLDGQNLRHDLNKGLPQDRAGRTENWLRTAHVAKQFNEAGLISLCAFVAPSAEGREQARALIGAERLITVYVQASPQVCRERDPQGLYAAGEDNIPGESFPYDVPLDADLVIDTQALSVEDGVKQVLDLLRERQAI.

The segment at M1–Q463 is sulfate adenylyltransferase. Residues K22–L241 form the tr-type G domain. The segment at G31 to S38 is G1. Residue G31 to S38 participates in GTP binding. The segment at G89–D93 is G2. The segment at D110 to G113 is G3. GTP-binding positions include D110–H114 and N165–D168. The tract at residues N165–D168 is G4. The segment at S204 to L206 is G5. The segment at Q464–I633 is adenylyl-sulfate kinase. Residue G472 to S479 coordinates ATP.

The protein in the C-terminal section; belongs to the APS kinase family. In the N-terminal section; belongs to the TRAFAC class translation factor GTPase superfamily. Classic translation factor GTPase family. CysN/NodQ subfamily. Heterodimer composed of CysD, the smaller subunit, and CysNC.

The enzyme catalyses sulfate + ATP + H(+) = adenosine 5'-phosphosulfate + diphosphate. It carries out the reaction adenosine 5'-phosphosulfate + ATP = 3'-phosphoadenylyl sulfate + ADP + H(+). Its pathway is sulfur metabolism; hydrogen sulfide biosynthesis; sulfite from sulfate: step 1/3. It participates in sulfur metabolism; hydrogen sulfide biosynthesis; sulfite from sulfate: step 2/3. Its function is as follows. With CysD forms the ATP sulfurylase (ATPS) that catalyzes the adenylation of sulfate producing adenosine 5'-phosphosulfate (APS) and diphosphate, the first enzymatic step in sulfur assimilation pathway. APS synthesis involves the formation of a high-energy phosphoric-sulfuric acid anhydride bond driven by GTP hydrolysis by CysN coupled to ATP hydrolysis by CysD. APS kinase catalyzes the synthesis of activated sulfate. The protein is Bifunctional enzyme CysN/CysC (cysNC) of Pseudomonas aeruginosa (strain ATCC 15692 / DSM 22644 / CIP 104116 / JCM 14847 / LMG 12228 / 1C / PRS 101 / PAO1).